The primary structure comprises 273 residues: 4-hydroxy-tetrahydrodipicolinate reductase (273 aa).

NAD(+) is bound by residues 12–17 (GAGGRM) and glutamate 38. Arginine 39 is a binding site for NADP(+). Residues 102–104 (GTT) and 126–129 (AANF) contribute to the NAD(+) site. Histidine 159 serves as the catalytic Proton donor/acceptor. Histidine 160 is a binding site for (S)-2,3,4,5-tetrahydrodipicolinate. The active-site Proton donor is the lysine 163. 169 to 170 (GT) provides a ligand contact to (S)-2,3,4,5-tetrahydrodipicolinate.

This sequence belongs to the DapB family. In terms of assembly, homotetramer.

It localises to the cytoplasm. It catalyses the reaction (S)-2,3,4,5-tetrahydrodipicolinate + NAD(+) + H2O = (2S,4S)-4-hydroxy-2,3,4,5-tetrahydrodipicolinate + NADH + H(+). It carries out the reaction (S)-2,3,4,5-tetrahydrodipicolinate + NADP(+) + H2O = (2S,4S)-4-hydroxy-2,3,4,5-tetrahydrodipicolinate + NADPH + H(+). It participates in amino-acid biosynthesis; L-lysine biosynthesis via DAP pathway; (S)-tetrahydrodipicolinate from L-aspartate: step 4/4. Its function is as follows. Catalyzes the conversion of 4-hydroxy-tetrahydrodipicolinate (HTPA) to tetrahydrodipicolinate. The polypeptide is 4-hydroxy-tetrahydrodipicolinate reductase (Klebsiella pneumoniae (strain 342)).